Consider the following 141-residue polypeptide: Hemoglobin subunit alpha (141 aa).

Residues 1 to 141 (VLSSADKNNI…VSTVLTSKYR (141 aa)) form the Globin domain. Ser-3 carries the post-translational modification Phosphoserine. N6-succinyllysine is present on residues Lys-7 and Lys-11. Lys-16 bears the N6-acetyllysine; alternate mark. An N6-succinyllysine; alternate modification is found at Lys-16. A Phosphotyrosine modification is found at Tyr-24. Residue Ser-35 is modified to Phosphoserine. Position 40 is an N6-succinyllysine (Lys-40). Ser-49 is modified (phosphoserine). His-58 lines the O2 pocket. His-87 contributes to the heme b binding site. Ser-102 bears the Phosphoserine mark. A phosphothreonine mark is found at Thr-108, Thr-134, and Thr-137. Ser-138 is modified (phosphoserine).

The protein belongs to the globin family. In terms of assembly, heterotetramer of two alpha chains and two beta chains. Red blood cells.

Involved in oxygen transport from the lung to the various peripheral tissues. Its function is as follows. Hemopressin acts as an antagonist peptide of the cannabinoid receptor CNR1. Hemopressin-binding efficiently blocks cannabinoid receptor CNR1 and subsequent signaling. The sequence is that of Hemoglobin subunit alpha (HBA) from Paguma larvata (Masked palm civet).